A 329-amino-acid polypeptide reads, in one-letter code: rRNA 2'-O-methyltransferase fibrillarin (329 aa).

The interval 1–85 (MAFGAPRGRG…GGARGGARGG (85 aa)) is disordered. The span at 13 to 84 (RGGFGGRGGS…RGGARGGARG (72 aa)) shows a compositional bias: gly residues. Residues 181-182 (TS), 200-201 (EF), 225-226 (DA), and 245-248 (DVAQ) contribute to the S-adenosyl-L-methionine site.

The protein belongs to the methyltransferase superfamily. Fibrillarin family. Component of box C/D small nucleolar ribonucleoprotein (snoRNP) particles that contain SNU13, NOP1, SIK1/NOP56 and NOP58, plus a guide RNA. In terms of processing, by homology to other fibrillarins, some or all of the N-terminal domain arginines are modified to asymmetric dimethylarginine (DMA).

Its subcellular location is the nucleus. The protein resides in the nucleolus. The catalysed reaction is L-glutaminyl-[histone H2A] + S-adenosyl-L-methionine = N(5)-methyl-L-glutaminyl-[histone H2A] + S-adenosyl-L-homocysteine + H(+). Its function is as follows. S-adenosyl-L-methionine-dependent methyltransferase that has the ability to methylate both RNAs and proteins. Involved in pre-rRNA processing. Utilizes the methyl donor S-adenosyl-L-methionine to catalyze the site-specific 2'-hydroxyl methylation of ribose moieties in pre-ribosomal RNA. Site specificity is provided by a guide RNA that base pairs with the substrate. Methylation occurs at a characteristic distance from the sequence involved in base pairing with the guide RNA. Also acts as a protein methyltransferase by mediating methylation of 'Gln-105' of histone H2A (H2AQ105me), a modification that impairs binding of the FACT complex and is specifically present at 35S ribosomal DNA locus. The protein is rRNA 2'-O-methyltransferase fibrillarin (NOP1) of Debaryomyces hansenii (strain ATCC 36239 / CBS 767 / BCRC 21394 / JCM 1990 / NBRC 0083 / IGC 2968) (Yeast).